We begin with the raw amino-acid sequence, 466 residues long: Ribulose bisphosphate carboxylase large chain (466 aa).

An N6,N6,N6-trimethyllysine modification is found at lysine 5. 2 residues coordinate substrate: asparagine 114 and threonine 164. Lysine 166 (proton acceptor) is an active-site residue. Lysine 168 is a binding site for substrate. Residues lysine 192, aspartate 194, and glutamate 195 each contribute to the Mg(2+) site. Lysine 192 carries the post-translational modification N6-carboxylysine. The Proton acceptor role is filled by histidine 285. Substrate-binding residues include arginine 286, histidine 318, and serine 370.

This sequence belongs to the RuBisCO large chain family. Type I subfamily. As to quaternary structure, heterohexadecamer of 8 large chains and 8 small chains; disulfide-linked. The disulfide link is formed within the large subunit homodimers. Mg(2+) is required as a cofactor. The disulfide bond which can form in the large chain dimeric partners within the hexadecamer appears to be associated with oxidative stress and protein turnover.

Its subcellular location is the plastid. The protein resides in the chloroplast. The catalysed reaction is 2 (2R)-3-phosphoglycerate + 2 H(+) = D-ribulose 1,5-bisphosphate + CO2 + H2O. It catalyses the reaction D-ribulose 1,5-bisphosphate + O2 = 2-phosphoglycolate + (2R)-3-phosphoglycerate + 2 H(+). Functionally, ruBisCO catalyzes two reactions: the carboxylation of D-ribulose 1,5-bisphosphate, the primary event in carbon dioxide fixation, as well as the oxidative fragmentation of the pentose substrate in the photorespiration process. Both reactions occur simultaneously and in competition at the same active site. The protein is Ribulose bisphosphate carboxylase large chain of Bixa orellana (Lipstick tree).